We begin with the raw amino-acid sequence, 765 residues long: Cullin-5 (765 aa).

Residues 696-757 enclose the Cullin neddylation domain; it reads RELRVQEGIV…NKYMERRADD (62 aa). Lys709 participates in a covalent cross-link: Glycyl lysine isopeptide (Lys-Gly) (interchain with G-Cter in NEDD8).

It belongs to the cullin family. In terms of assembly, interacts with rbx-1 and rbx-2. Post-translationally, neddylated; which enhances the ubiquitination activity of SCF-like complex.

Its pathway is protein modification; protein ubiquitination. Probable core component of cullin-based SCF-like E3 ubiquitin-protein ligase complexes which mediate the ubiquitination and subsequent proteasomal degradation of target proteins. In association with rbx-2 seems to be involved in meiotic cell cycle progression in the germline. Required for phosphorylation of the MAP kinase MPK-1 in the germline. The polypeptide is Cullin-5 (cul-5) (Caenorhabditis elegans).